Reading from the N-terminus, the 116-residue chain is Classical arabinogalactan protein 25 (116 aa).

A signal peptide spans 1-28; the sequence is MAFSFLNKLLIIFIFIFISLSSSSPTIS. The tract at residues 40–95 is disordered; the sequence is LLPSPGDALPSDDGSGTIPSSPSPPDPDTNDGSYPDPLAFSPFASPPVSSPSPPPS. Composition is skewed to low complexity over residues 50-59 and 69-82; these read SDDGSGTIPS and NDGSYPDPLAFSPF. The span at 83-95 shows a compositional bias: pro residues; the sequence is ASPPVSSPSPPPS. Ser-89 carries the GPI-anchor amidated serine lipid modification. The propeptide at 90–116 is removed in mature form; sequence PSPPPSLPSAGVLLISLIISSASFLAL.

It belongs to the classical AGP family. In terms of processing, O-glycosylated on the hydroxyproline residues.

The protein localises to the cell membrane. In terms of biological role, proteoglycan that seems to be implicated in diverse developmental roles such as differentiation, cell-cell recognition, embryogenesis and programmed cell death. The chain is Classical arabinogalactan protein 25 (AGP25) from Arabidopsis thaliana (Mouse-ear cress).